A 152-amino-acid polypeptide reads, in one-letter code: Endoribonuclease YbeY (152 aa).

Zn(2+) is bound by residues His118, His122, and His128.

It belongs to the endoribonuclease YbeY family. It depends on Zn(2+) as a cofactor.

The protein localises to the cytoplasm. In terms of biological role, single strand-specific metallo-endoribonuclease involved in late-stage 70S ribosome quality control and in maturation of the 3' terminus of the 16S rRNA. The protein is Endoribonuclease YbeY of Lacticaseibacillus paracasei (strain ATCC 334 / BCRC 17002 / CCUG 31169 / CIP 107868 / KCTC 3260 / NRRL B-441) (Lactobacillus paracasei).